Consider the following 394-residue polypeptide: THAP domain-containing protein 5 (394 aa).

The THAP-type zinc-finger motif lies at 1–84; that stretch reads MPRYCAAICC…LKQTAIPTIF (84 aa). The tract at residues 86–109 is disordered; the sequence is LPEDNQEKDPSKKKSQKKKLKSEK. Residues 320–323 carry the HCFC1-binding motif (HBM) motif; the sequence is EHSY. Residues 347–381 adopt a coiled-coil conformation; that stretch reads LELQEQQTLGRLKSLEALIRQLKQENWLSEENVKI.

As to quaternary structure, interacts with HTRA2; under apoptotic conditions. Interacts with ABRAXAS2. Cleaved by HTRA2 during apoptosis.

It is found in the nucleus. Its function is as follows. Has sequence-specific DNA-binding activity and can function as transcriptional repressor (in vitro). May be a regulator of cell cycle: THAP5 overexpression in human cell lines causes cell cycle arrest at G2/M phase. The sequence is that of THAP domain-containing protein 5 (THAP5) from Bos taurus (Bovine).